We begin with the raw amino-acid sequence, 133 residues long: Type III secretion protein HrcQb (133 aa).

A compositionally biased stretch (acidic residues) spans 1-21 (MSTEDLYQDDVEMLDDYEEPV). The tract at residues 1–60 (MSTEDLYQDDVEMLDDYEEPVPEQADQQQRDDEYAEHAFGYADSDAEHEEQSGDHHESPM) is disordered. A compositionally biased stretch (basic and acidic residues) spans 49–59 (EEQSGDHHESP).

Belongs to the FliN/MopA/SpaO family. In terms of assembly, homotetramer. The four monomers assemble into two tightly bound homodimers. Interacts with HrcQa.

The protein resides in the cytoplasm. In terms of biological role, component of the type III secretion system, which is required for effector protein delivery, parasitism, and pathogenicity. Probably participates in the formation of a C-ring-like assembly along with HrcQa. The protein is Type III secretion protein HrcQb (hrcQb) of Pseudomonas syringae pv. syringae.